A 557-amino-acid chain; its full sequence is Potassium-transporting ATPase potassium-binding subunit (557 aa).

Helical transmembrane passes span 5–25 (GFLLIATFLLVLMVLARPLGS), 63–83 (LCAILGLNMLGLAVLFFMLLG), 132–152 (GLTVQNFLSAASGIAVIFAFI), 170–190 (LLRITLWVLVPVALLIALFFI), 253–273 (FVQMLAIFLIPTALCFAFGEV), 283–303 (LLWAMSVIFVICVGVVMWAEV), 329–349 (VLVSSLFAVVTTAASCGAVIA), 356–376 (ALGGMVPMWLMQIGEVVFGGV), 379–399 (GLYGMMLFVLLAVFIAGLMIG), 416–436 (LTALAILVTPTLVLMGAALAM), 484–504 (LLAFCMFVGRFGVIIPVMAIA), and 526–546 (LFVGLLIGTVLLVGALTFIPA).

It belongs to the KdpA family. The system is composed of three essential subunits: KdpA, KdpB and KdpC.

The protein localises to the cell inner membrane. In terms of biological role, part of the high-affinity ATP-driven potassium transport (or Kdp) system, which catalyzes the hydrolysis of ATP coupled with the electrogenic transport of potassium into the cytoplasm. This subunit binds the periplasmic potassium ions and delivers the ions to the membrane domain of KdpB through an intramembrane tunnel. This is Potassium-transporting ATPase potassium-binding subunit from Shigella flexneri.